Reading from the N-terminus, the 1130-residue chain is Tyrosine-protein kinase ABL1 (1130 aa).

A CAP region spans residues 1 to 60 (MLEICLKLVGCKSKKGLSSSSSCYLEEALQRPVASDFEPQGLSEAARWNSKENLLAGPSE). Residue Leu-2 is the site of N-myristoyl glycine attachment. Ser-50 is subject to Phosphoserine. The region spanning 61–121 (NDPNLFVALY…PSNYITPVNS (61 aa)) is the SH3 domain. At Tyr-70 the chain carries Phosphotyrosine; by autocatalysis. Phosphotyrosine occurs at positions 115, 128, 139, 172, 185, and 215. The SH2 domain maps to 127 to 217 (WYHGPVSRNA…GLITTLHYPA (91 aa)). Tyr-226 carries the post-translational modification Phosphotyrosine; by autocatalysis. Ser-229 carries the phosphoserine modification. Positions 242-493 (ITMKHKLGGG…PSFAEIHQAF (252 aa)) constitute a Protein kinase domain. 248 to 256 (LGGGQYGEV) provides a ligand contact to ATP. 2 positions are modified to phosphotyrosine: Tyr-253 and Tyr-257. Residues Lys-271 and 316–322 (EFMTYGN) contribute to the ATP site. The Proton acceptor role is filled by Asp-363. A Kinase activation loop motif is present at residues 381–405 (DFGLSRLMTGDTYTAHAGAKFPIKW). Tyr-393 is subject to Phosphotyrosine; by autocatalysis and SRC-type Tyr-kinases. Tyr-413 is subject to Phosphotyrosine. 3 positions are modified to phosphoserine: Ser-446, Ser-559, and Ser-569. The tract at residues 518–996 (AVSTLLQAPE…SASSALAGDQ (479 aa)) is disordered. Positions 537-566 (RAAEHRDTTDVPEMPHSKGQGESDPLDHEP) are enriched in basic and acidic residues. Basic and acidic residues predominate over residues 586–597 (EDERLLPKDKKT). A Nuclear localization signal 1 motif is present at residues 605-609 (KKKKK). A phosphoserine; by PAK2 mark is found at Ser-618 and Ser-619. Residues Ser-620, Ser-659, and Ser-683 each carry the phosphoserine modification. Residues 620-640 (SFREMDGQPERRGAGEEEGRD) show a composition bias toward basic and acidic residues. The segment covering 689-698 (KSSTLTSSRL) has biased composition (polar residues). The short motif at 709–715 (SSKRFLR) is the Nuclear localization signal 2 element. N6-acetyllysine; by EP300 is present on Lys-711. A Phosphoserine modification is found at Ser-718. A phosphothreonine mark is found at Thr-735 and Thr-751. The span at 740–752 (LQSTGRQFDSSTF) shows a compositional bias: polar residues. Basic and acidic residues predominate over residues 755-774 (HKSEKPALPRKRAGENRSDQ). The Nuclear localization signal 3 motif lies at 762-769 (LPRKRAGE). Thr-781 is modified (phosphothreonine). Positions 788–802 (KKNEEAADEVFKDIM) are enriched in basic and acidic residues. Phosphothreonine occurs at positions 814, 823, 844, and 852. The residue at position 855 (Ser-855) is a Phosphoserine. The interval 869–968 (PAEESRVRRH…VLPATPKPQS (100 aa)) is DNA-binding. Basic and acidic residues predominate over residues 881 to 891 (SSESPGRDKGK). Residues 905-915 (ASAGKAGGKPS) show a composition bias toward low complexity. The residue at position 917 (Ser-917) is a Phosphoserine. Residues 953–1130 (EGLKKPVLPA…VKEISDIVQR (178 aa)) are F-actin-binding. The span at 965-975 (KPQSAKPSGTP) shows a compositional bias: polar residues. Ser-977 carries the phosphoserine modification. Low complexity predominate over residues 984 to 993 (TLPSASSALA). The short motif at 1090 to 1100 (LENNLRELQIC) is the Nuclear export signal element.

This sequence belongs to the protein kinase superfamily. Tyr protein kinase family. ABL subfamily. Interacts with SORBS1 following insulin stimulation. Found in a trimolecular complex containing CDK5 and CABLES1. Interacts with CABLES1 and PSTPIP1. Interacts with ZDHHC16, ITGB1 and HCK. Interacts with STX17; probably phosphorylates STX17. Interacts with INPPL1/SHIP2. Interacts with the 14-3-3 proteins, YWHAB, YWHAE, YWHAG, YWHAH, SFN and YWHAZ; the interaction with 14-3-3 proteins requires phosphorylation on Thr-735 and, sequesters ABL1 into the cytoplasm. Interacts with ABI1, ABI2, BCR, CRK, FGR, FYN, HCK, LYN, PSMA7 RAD9A, RAD51, RAD52, TP73 and WASF3. A complex made of ABL1, CTTN and MYLK regulates cortical actin-based cytoskeletal rearrangement critical to sphingosine 1-phosphate (S1P)-mediated endothelial cell (EC) barrier enhancement. Interacts (via SH3 domain) with CASP9; the interaction is direct and increases in the response of cells to genotoxic stress and ABL1/c-Abl activation. Found in a complex with ABL1, ABL2, CRK and UNC119; leading to the inhibition of CRK phosphorylation by ABL kinases. Interacts with TBX21. Interacts with NEDD9/HEF1; interaction is induced by CXCL12 promotion of ABL-mediated phosphorylation of NEDD9/HEF1. The cofactor is Mg(2+). Post-translationally, acetylated at Lys-711 by EP300 which promotes the cytoplasmic translocation. In terms of processing, phosphorylation at Tyr-70 by members of the SRC family of kinases disrupts SH3 domain-based autoinhibitory interactions and intermolecular associations, such as that with ABI1, and also enhances kinase activity. Phosphorylation at Tyr-226 and Tyr-393 correlate with increased activity. DNA damage-induced activation of ABL1 requires the function of ATM and Ser-446 phosphorylation. Phosphorylation at Ser-569 has been attributed to a CDC2-associated kinase and is coupled to cell division. Phosphorylation at Ser-618 and Ser-619 by PAK2 increases binding to CRK and reduces binding to ABI1. Phosphorylation on Thr-735 is required for binding 14-3-3 proteins for cytoplasmic translocation. Phosphorylated by PRKDC. Polyubiquitinated. Polyubiquitination of ABL1 leads to degradation. As to expression, widely expressed.

The protein resides in the cytoplasm. It is found in the cytoskeleton. Its subcellular location is the nucleus. The protein localises to the mitochondrion. It localises to the nucleus membrane. The enzyme catalyses L-tyrosyl-[protein] + ATP = O-phospho-L-tyrosyl-[protein] + ADP + H(+). Its activity is regulated as follows. Stabilized in the inactive form by an association between the SH3 domain and the SH2-TK linker region, interactions of the N-terminal cap, and contributions from an N-terminal myristoyl group and phospholipids. Activated by autophosphorylation as well as by SRC-family kinase-mediated phosphorylation. Activated by RIN1 binding to the SH2 and SH3 domains. Also stimulated by cell death inducers and DNA-damage. Phosphatidylinositol 4,5-bisphosphate (PIP2), a highly abundant phosphoinositide known to regulate cytoskeletal and membrane proteins, also inhibits the tyrosine kinase activity. Activated by 5-(1,3-diaryl-1H-pyrazol-4-yl)hydantoin, 5-[3-(4-fluorophenyl)-1-phenyl-1H-pyrazol-4-yl]-2,4-imidazolidinedione (DPH). Inhibited by ABI1, whose activity is controlled by ABL1 itself through tyrosine phosphorylation. Also inhibited by imatinib mesylate (Gleevec) which is used for the treatment of chronic myeloid leukemia (CML), and by VX-680, an inhibitor that also acts on imatinib-resistant mutants. In terms of biological role, non-receptor tyrosine-protein kinase that plays a role in many key processes linked to cell growth and survival such as cytoskeleton remodeling in response to extracellular stimuli, cell motility and adhesion, receptor endocytosis, autophagy, DNA damage response and apoptosis. Coordinates actin remodeling through tyrosine phosphorylation of proteins controlling cytoskeleton dynamics like WASF3 (involved in branch formation); ANXA1 (involved in membrane anchoring); DBN1, DBNL, CTTN, RAPH1 and ENAH (involved in signaling); or MAPT and PXN (microtubule-binding proteins). Phosphorylation of WASF3 is critical for the stimulation of lamellipodia formation and cell migration. Involved in the regulation of cell adhesion and motility through phosphorylation of key regulators of these processes such as BCAR1, CRK, CRKL, DOK1, EFS or NEDD9. Phosphorylates multiple receptor tyrosine kinases and more particularly promotes endocytosis of EGFR, facilitates the formation of neuromuscular synapses through MUSK, inhibits PDGFRB-mediated chemotaxis and modulates the endocytosis of activated B-cell receptor complexes. Other substrates which are involved in endocytosis regulation are the caveolin (CAV1) and RIN1. Moreover, ABL1 regulates the CBL family of ubiquitin ligases that drive receptor down-regulation and actin remodeling. Phosphorylation of CBL leads to increased EGFR stability. Involved in late-stage autophagy by regulating positively the trafficking and function of lysosomal components. ABL1 targets to mitochondria in response to oxidative stress and thereby mediates mitochondrial dysfunction and cell death. In response to oxidative stress, phosphorylates serine/threonine kinase PRKD2 at 'Tyr-717'. ABL1 is also translocated in the nucleus where it has DNA-binding activity and is involved in DNA-damage response and apoptosis. Many substrates are known mediators of DNA repair: DDB1, DDB2, ERCC3, ERCC6, RAD9A, RAD51, RAD52 or WRN. Activates the proapoptotic pathway when the DNA damage is too severe to be repaired. Phosphorylates TP73, a primary regulator for this type of damage-induced apoptosis. Phosphorylates the caspase CASP9 on 'Tyr-153' and regulates its processing in the apoptotic response to DNA damage. Phosphorylates PSMA7 that leads to an inhibition of proteasomal activity and cell cycle transition blocks. ABL1 also acts as a regulator of multiple pathological signaling cascades during infection. Several known tyrosine-phosphorylated microbial proteins have been identified as ABL1 substrates. This is the case of A36R of Vaccinia virus, Tir (translocated intimin receptor) of pathogenic E.coli and possibly Citrobacter, CagA (cytotoxin-associated gene A) of H.pylori, or AnkA (ankyrin repeat-containing protein A) of A.phagocytophilum. Pathogens can highjack ABL1 kinase signaling to reorganize the host actin cytoskeleton for multiple purposes, like facilitating intracellular movement and host cell exit. Finally, functions as its own regulator through autocatalytic activity as well as through phosphorylation of its inhibitor, ABI1. Regulates T-cell differentiation in a TBX21-dependent manner. Positively regulates chemokine-mediated T-cell migration, polarization, and homing to lymph nodes and immune-challenged tissues, potentially via activation of NEDD9/HEF1 and RAP1. Phosphorylates TBX21 on tyrosine residues leading to an enhancement of its transcriptional activator activity. This is Tyrosine-protein kinase ABL1 (ABL1) from Homo sapiens (Human).